The primary structure comprises 337 residues: Methionyl-tRNA formyltransferase (337 aa).

110 to 113 contributes to the (6S)-5,6,7,8-tetrahydrofolate binding site; the sequence is SLLP.

Belongs to the Fmt family.

It catalyses the reaction L-methionyl-tRNA(fMet) + (6R)-10-formyltetrahydrofolate = N-formyl-L-methionyl-tRNA(fMet) + (6S)-5,6,7,8-tetrahydrofolate + H(+). Functionally, attaches a formyl group to the free amino group of methionyl-tRNA(fMet). The formyl group appears to play a dual role in the initiator identity of N-formylmethionyl-tRNA by promoting its recognition by IF2 and preventing the misappropriation of this tRNA by the elongation apparatus. The sequence is that of Methionyl-tRNA formyltransferase from Frankia casuarinae (strain DSM 45818 / CECT 9043 / HFP020203 / CcI3).